The chain runs to 346 residues: Protein NDL1 (346 aa).

It belongs to the NDRG family. As to quaternary structure, interacts with GB1. Interacts with the heterodimers formed by GB1 and GG1, or GB1 and GG2. Interacts with RGS1. In terms of tissue distribution, expressed in root vasculature, cotyledons, leaves, petals, mature stamens and pollen grains.

It localises to the cytoplasm. Interacts with the heterotrimeric G protein beta subunit GB1 and plays an significant role in GB1-dependent regulation of lateral root formation. Involved in a signaling pathway that modulates root auxin transport and auxin gradients. Acts partially by positively regulating the auxin carrier PIN2 and AUX1. Acts, together with GB1 as positive regulator of meristem initiation and branching. GB1 and NDL1 positively regulate basipetal inflorescence auxin transport and modulate MAX2 expression in shoots, which regulates organ and lateral meristem formation by the establishment and maintenance of auxin gradients. This Arabidopsis thaliana (Mouse-ear cress) protein is Protein NDL1.